A 160-amino-acid polypeptide reads, in one-letter code: Ribosome maturation factor RimP (160 aa).

The protein belongs to the RimP family.

The protein localises to the cytoplasm. In terms of biological role, required for maturation of 30S ribosomal subunits. This Syntrophus aciditrophicus (strain SB) protein is Ribosome maturation factor RimP.